The following is a 643-amino-acid chain: Conglutin alpha 2 (643 aa).

The first 22 residues, Met1–Ala22, serve as a signal peptide directing secretion. Cystine bridges form between Cys31-Cys64 and Cys107-Cys464. The Cupin type-1 1 domain maps to Leu36–Asn261. Disordered regions lie at residues Thr110–Gln142, Pro190–Gly243, and Pro285–Gly458. Residues Gln207–Gln218 show a composition bias toward low complexity. 2 stretches are compositionally biased toward basic and acidic residues: residues His228 to Lys237 and Pro298 to Glu313. Acidic residues predominate over residues Glu314 to Glu323. Composition is skewed to basic and acidic residues over residues Pro324–Gln333 and Gln357–Thr369. The span at Arg422–Gly433 shows a compositional bias: basic residues. In terms of domain architecture, Cupin type-1 2 spans Glu470–Ser616. The segment covering Asn623–Ser632 has biased composition (polar residues). The segment at Asn623–Ala643 is disordered. The span at Ser634 to Ala643 shows a compositional bias: basic and acidic residues.

The protein belongs to the 11S seed storage protein (globulins) family. As to quaternary structure, hexamer; each subunit is composed of an acidic and a basic chain derived from a single precursor and linked by a disulfide bond. Component of globulins complexes which accumulate in seeds.

Functionally, sulfur-rich seed storage protein. This protein found in the seeds of many leguminous and non-leguminous plants is the source of sulfur-containing amino acids in seed meals. The protein is Conglutin alpha 2 of Lupinus angustifolius (Narrow-leaved blue lupine).